A 559-amino-acid chain; its full sequence is Dihydroxy-acid dehydratase (559 aa).

[2Fe-2S] cluster is bound at residue cysteine 52. Mg(2+) is bound at residue aspartate 84. Cysteine 125 lines the [2Fe-2S] cluster pocket. Positions 126 and 127 each coordinate Mg(2+). At lysine 127 the chain carries N6-carboxylysine. [2Fe-2S] cluster is bound at residue cysteine 197. Glutamate 447 contributes to the Mg(2+) binding site. Catalysis depends on serine 473, which acts as the Proton acceptor.

It belongs to the IlvD/Edd family. As to quaternary structure, homodimer. Requires [2Fe-2S] cluster as cofactor. The cofactor is Mg(2+).

The enzyme catalyses (2R)-2,3-dihydroxy-3-methylbutanoate = 3-methyl-2-oxobutanoate + H2O. It carries out the reaction (2R,3R)-2,3-dihydroxy-3-methylpentanoate = (S)-3-methyl-2-oxopentanoate + H2O. It participates in amino-acid biosynthesis; L-isoleucine biosynthesis; L-isoleucine from 2-oxobutanoate: step 3/4. It functions in the pathway amino-acid biosynthesis; L-valine biosynthesis; L-valine from pyruvate: step 3/4. Its function is as follows. Functions in the biosynthesis of branched-chain amino acids. Catalyzes the dehydration of (2R,3R)-2,3-dihydroxy-3-methylpentanoate (2,3-dihydroxy-3-methylvalerate) into 2-oxo-3-methylpentanoate (2-oxo-3-methylvalerate) and of (2R)-2,3-dihydroxy-3-methylbutanoate (2,3-dihydroxyisovalerate) into 2-oxo-3-methylbutanoate (2-oxoisovalerate), the penultimate precursor to L-isoleucine and L-valine, respectively. In Roseiflexus castenholzii (strain DSM 13941 / HLO8), this protein is Dihydroxy-acid dehydratase.